The chain runs to 130 residues: Large ribosomal subunit protein bL19c (130 aa).

The protein belongs to the bacterial ribosomal protein bL19 family.

The protein resides in the plastid. The protein localises to the chloroplast. This is Large ribosomal subunit protein bL19c (rpl19) from Chlorella vulgaris (Green alga).